A 245-amino-acid polypeptide reads, in one-letter code: Flavin-dependent thymidylate synthase (245 aa).

Residues 5–210 (IRVKLVNYTK…ELRPIIKWAK (206 aa)) enclose the ThyX domain. FAD contacts are provided by residues serine 59, 83 to 85 (RHR), and glutamine 91. Residues 80–83 (QLVR), 91–95 (QQSQR), and arginine 149 contribute to the dUMP site. The ThyX motif signature appears at 83–93 (RHRLASYTQQS). FAD is bound by residues 165-167 (NLR) and histidine 171. Arginine 176 is a binding site for dUMP. Residue arginine 176 is the Involved in ionization of N3 of dUMP, leading to its activation of the active site.

This sequence belongs to the thymidylate synthase ThyX family. In terms of assembly, homotetramer. FAD serves as cofactor.

The catalysed reaction is dUMP + (6R)-5,10-methylene-5,6,7,8-tetrahydrofolate + NADPH + H(+) = dTMP + (6S)-5,6,7,8-tetrahydrofolate + NADP(+). The protein operates within pyrimidine metabolism; dTTP biosynthesis. Its function is as follows. Catalyzes the reductive methylation of 2'-deoxyuridine-5'-monophosphate (dUMP) to 2'-deoxythymidine-5'-monophosphate (dTMP) while utilizing 5,10-methylenetetrahydrofolate (mTHF) as the methyl donor, and NADPH and FADH(2) as the reductant. In Thermococcus kodakarensis (strain ATCC BAA-918 / JCM 12380 / KOD1) (Pyrococcus kodakaraensis (strain KOD1)), this protein is Flavin-dependent thymidylate synthase.